The chain runs to 120 residues: uncharacterized protein (120 aa).

To B.subtilis XkdH.

This is an uncharacterized protein from Bacillus subtilis (strain 168).